A 483-amino-acid chain; its full sequence is PAT complex subunit CCDC47 (483 aa).

A signal peptide spans 1 to 20 (MKAFYAFCVVLLVFGSVSEA). Over 21-135 (KFDDFEDEED…PAHLQNSWES (115 aa)) the chain is Cytoplasmic. Residues 46–119 (MEDSVTESPQ…DTSSNKNKDP (74 aa)) form a disordered region. Over residues 60–104 (TEDDEDEATVELEGQDESQEGDFEDADTQEGDTESEPYDDEEFEG) the composition is skewed to acidic residues. Residues 105 to 118 (YEDKPDTSSNKNKD) are compositionally biased toward basic and acidic residues. The helical transmembrane segment at 136–156 (YYLEILMVTGLLAYIMNYIIG) threads the bilayer. The Lumenal portion of the chain corresponds to 157–483 (KNKNSRLAQA…KMKQIKVKAM (327 aa)). Asparagine 178 is a glycosylation site (N-linked (GlcNAc...) asparagine). The segment at 424–483 (QRQEAAQSRREEKKRAEKERIMNEEDPEKQRRLEEAALRREQKKLEKKQMKMKQIKVKAM) is disordered. The span at 430-472 (QSRREEKKRAEKERIMNEEDPEKQRRLEEAALRREQKKLEKKQ) shows a compositional bias: basic and acidic residues. The stretch at 450-483 (PEKQRRLEEAALRREQKKLEKKQMKMKQIKVKAM) forms a coiled coil. The segment covering 473-483 (MKMKQIKVKAM) has biased composition (basic residues).

The protein belongs to the CCDC47 family. In terms of assembly, component of the PAT complex, composed of WDR83OS/Asterix and CCDC47. The PAT complex is part of the multi-pass translocon (MPT) complex, composed of three subcomplexes, the GEL complex (composed of RAB5IF/OPTI and TMCO1), the BOS complex (composed of NCLN/Nicalin, NOMO1 and TMEM147) and the PAT complex (composed of WDR83OS/Asterix and CCDC47). The MPT complex associates with the SEC61 complex. Interacts with VCP, HSPA5, DERL1, DERL2 and SELENOS. In terms of tissue distribution, in the embryo, expressed in the endodermal layer of the yolk sac and in the small intestine.

The protein localises to the endoplasmic reticulum membrane. The protein resides in the rough endoplasmic reticulum membrane. Its function is as follows. Component of the multi-pass translocon (MPT) complex that mediates insertion of multi-pass membrane proteins into the lipid bilayer of membranes. The MPT complex takes over after the SEC61 complex: following membrane insertion of the first few transmembrane segments of proteins by the SEC61 complex, the MPT complex occludes the lateral gate of the SEC61 complex to promote insertion of subsequent transmembrane regions. Within the MPT complex, the PAT subcomplex sequesters any highly polar regions in the transmembrane domains away from the non-polar membrane environment until they can be buried in the interior of the fully assembled protein. Within the PAT subcomplex, CCDC47 occludes the lateral gate of the SEC61 complex. Involved in the regulation of calcium ion homeostasis in the ER. Required for proper protein degradation via the ERAD (ER-associated degradation) pathway. Has an essential role in the maintenance of ER organization during embryogenesis. This chain is PAT complex subunit CCDC47, found in Mus musculus (Mouse).